Here is a 114-residue protein sequence, read N- to C-terminus: Iron-sulfur cluster insertion protein ErpA (114 aa).

Iron-sulfur cluster is bound by residues Cys-42, Cys-106, and Cys-108.

This sequence belongs to the HesB/IscA family. In terms of assembly, homodimer. It depends on iron-sulfur cluster as a cofactor.

Functionally, required for insertion of 4Fe-4S clusters for at least IspG. This chain is Iron-sulfur cluster insertion protein ErpA, found in Proteus mirabilis (strain HI4320).